We begin with the raw amino-acid sequence, 166 residues long: Protein-export protein SecB (166 aa).

The protein belongs to the SecB family. Homotetramer, a dimer of dimers. One homotetramer interacts with 1 SecA dimer.

The protein resides in the cytoplasm. In terms of biological role, one of the proteins required for the normal export of preproteins out of the cell cytoplasm. It is a molecular chaperone that binds to a subset of precursor proteins, maintaining them in a translocation-competent state. It also specifically binds to its receptor SecA. This Cereibacter sphaeroides (strain ATCC 17025 / ATH 2.4.3) (Rhodobacter sphaeroides) protein is Protein-export protein SecB.